A 498-amino-acid polypeptide reads, in one-letter code: ATP synthase subunit beta, chloroplastic (498 aa).

172–179 contacts ATP; the sequence is GGAGVGKT.

The protein belongs to the ATPase alpha/beta chains family. F-type ATPases have 2 components, CF(1) - the catalytic core - and CF(0) - the membrane proton channel. CF(1) has five subunits: alpha(3), beta(3), gamma(1), delta(1), epsilon(1). CF(0) has four main subunits: a(1), b(1), b'(1) and c(9-12).

It localises to the plastid. The protein localises to the chloroplast thylakoid membrane. It catalyses the reaction ATP + H2O + 4 H(+)(in) = ADP + phosphate + 5 H(+)(out). Functionally, produces ATP from ADP in the presence of a proton gradient across the membrane. The catalytic sites are hosted primarily by the beta subunits. The protein is ATP synthase subunit beta, chloroplastic of Whiteheadia bifolia (Elephants ears).